Here is a 1146-residue protein sequence, read N- to C-terminus: Activator of SKN7 protein 10 (1146 aa).

Positions 1-15 are enriched in polar residues; sequence MSDYFSSRPSQTLTP. 2 disordered regions span residues 1 to 32 and 171 to 194; these read MSDYFSSRPSQTLTPMGNKPSGGGGGDDASSI and ITDPFTTAPRGPKKAQPAQKKVGL. Position 344 is a phosphoserine (serine 344). Positions 482–606 constitute a PH domain; that stretch reads CIKAGYFLKK…DCTLKDASST (125 aa). The disordered stretch occupies residues 553–575; it reads NNHHRQASDVHNSSTTTGGTAGA. Positions 564 to 575 are enriched in low complexity; that stretch reads NSSTTTGGTAGA. Serine 793 is subject to Phosphoserine. Residue threonine 808 is modified to Phosphothreonine. Disordered regions lie at residues 835–854 and 909–982; these read MATSGNTTPSYSSGSRPQSM and PVNS…TAMR. A compositionally biased stretch (low complexity) spans 912 to 924; the sequence is SPGSSNSESSSGG. Positions 939 to 950 are enriched in polar residues; the sequence is YTQRNSEGSSPC. Position 944 is a phosphoserine (serine 944). Positions 958–968 are enriched in low complexity; it reads QQQQPLQMQPL. At serine 969 the chain carries Phosphoserine. The span at 969 to 982 shows a compositional bias: polar residues; it reads SRTSSSSVNVTAMR. Threonine 1017 carries the post-translational modification Phosphothreonine. Phosphoserine is present on residues serine 1070, serine 1095, and serine 1098. The segment at 1124-1146 is disordered; the sequence is GIQEDDGDSTNNDTIKLNQSIYS. The segment covering 1132–1146 has biased composition (polar residues); that stretch reads STNNDTIKLNQSIYS.

It belongs to the RGC1 family. As to quaternary structure, component of the RNA polymerase II holoenzyme. Interacts with RPO21 and SSN8. In terms of processing, phosphorylated in response to various stresses. stress-induced phosphorylation is partially dependent on HOG1.

Its subcellular location is the cytoplasm. In terms of biological role, positive regulator of FPS1 glycerol channel required for the glycerol efflux. As a component of the RNA polymerase II holoenzyme, is required for SSN8 destruction in response to oxidative stress but not heat shock. Required for cell survival in response to heat shock independent of SSN8. This chain is Activator of SKN7 protein 10 (ASK10), found in Saccharomyces cerevisiae (strain ATCC 204508 / S288c) (Baker's yeast).